Here is a 410-residue protein sequence, read N- to C-terminus: Trifunctional NAD biosynthesis/regulator protein NadR (410 aa).

Positions 7–62 constitute an HTH cro/C1-type domain; it reads LKTAIKQQGCTLQQVADASGMTKGYLSQLLNAKIKSPSAQKLEALHRFLGLEFPRQ. The H-T-H motif DNA-binding region spans 18-37; that stretch reads LQQVADASGMTKGYLSQLLN. Positions 63–229 are nicotinamide mononucleotide adenylyltransferase; sequence KKTIGVVFGK…EYIPTEVKPF (167 aa). NAD(+) is bound by residues 70-73, His-77, Arg-104, 144-157, 177-179, 204-206, 259-261, and 294-297; these read FGKF, EEGMEPYPHGWDVW, TSE, MSI, SAW, and YIDF. The interval 230–410 is ribosylnicotinamide kinase; sequence FVRTVAILGG…LVREMMGEQR (181 aa).

The protein in the central section; belongs to the bacterial NMN adenylyltransferase family. It in the C-terminal section; belongs to the bacterial RNK family. As to quaternary structure, homotetramer.

It is found in the cell membrane. It localises to the cytoplasm. The catalysed reaction is beta-nicotinamide D-ribonucleotide + ATP + H(+) = diphosphate + NAD(+). It carries out the reaction beta-nicotinamide D-riboside + ATP = beta-nicotinamide D-ribonucleotide + ADP + H(+). Its pathway is cofactor biosynthesis; NAD(+) biosynthesis [regulation]. The protein operates within cofactor biosynthesis; NAD(+) biosynthesis; NAD(+) from nicotinamide D-ribonucleotide: step 1/1. Feed-back regulated by NAD. A high level of NAD causes NadR to lose enzymatic activity and repress several NAD synthetic genes; conversely, a low NAD level activates the assimilatory enzymatic activities and leads to derepression of biosynthetic genes. Functionally, this enzyme has three activities: DNA binding, nicotinamide mononucleotide (NMN) adenylyltransferase and ribosylnicotinamide (RN) kinase. The DNA-binding domain binds to the nadB operator sequence in an NAD- and ATP-dependent manner. As NAD levels increase within the cell, the affinity of NadR for the nadB operator regions of nadA, nadB, and pncB increases, repressing the transcription of these genes. The RN kinase activity catalyzes the phosphorylation of RN to form nicotinamide ribonucleotide. The NMN adenylyltransferase activity catalyzes the transfer of the AMP moiety of ATP to nicotinamide ribonucleotide to form NAD(+). The NMN adenylyltransferase domain also functions as the NAD and ATP sensor. In Escherichia coli (strain K12), this protein is Trifunctional NAD biosynthesis/regulator protein NadR (nadR).